The primary structure comprises 363 residues: D-alanine--D-alanine ligase (363 aa).

The ATP-grasp domain maps to K148–E353. R176 to E231 serves as a coordination point for ATP. Mg(2+) contacts are provided by D308, E320, and N322.

It belongs to the D-alanine--D-alanine ligase family. Mg(2+) is required as a cofactor. Mn(2+) serves as cofactor.

Its subcellular location is the cytoplasm. The catalysed reaction is 2 D-alanine + ATP = D-alanyl-D-alanine + ADP + phosphate + H(+). The protein operates within cell wall biogenesis; peptidoglycan biosynthesis. Its function is as follows. Cell wall formation. This chain is D-alanine--D-alanine ligase, found in Nocardia farcinica (strain IFM 10152).